Reading from the N-terminus, the 337-residue chain is Viral cathepsin (337 aa).

The signal sequence occupies residues 1–16 (MNKILILLLLVSAVLT). Positions 17–126 (SHDQVVAVTI…VVDGPGQRQR (110 aa)) are cleaved as a propeptide — activation peptide. 3 cysteine pairs are disulfide-bonded: Cys-147–Cys-188, Cys-181–Cys-221, and Cys-276–Cys-324. Residue Cys-150 is part of the active site. Residues His-283 and Asn-303 contribute to the active site.

This sequence belongs to the peptidase C1 family. In terms of processing, synthesized as an inactive proenzyme and activated by proteolytic removal of the inhibitory propeptide.

The catalysed reaction is Endopeptidase of broad specificity, hydrolyzing substrates of both cathepsin L and cathepsin B.. Cysteine protease that plays an essential role in host liquefaction to facilitate horizontal transmission of the virus. May participate in the degradation of foreign protein expressed by the baculovirus system. This Mamestra configurata (bertha armyworm) protein is Viral cathepsin (VCATH).